The sequence spans 587 residues: A-type ATP synthase subunit A (587 aa).

An ATP-binding site is contributed by 234–241; that stretch reads GPFGSGKT.

It belongs to the ATPase alpha/beta chains family. The N-terminus (approximately residues 106-122) interacts with subunit H. Has multiple subunits with at least A(3), B(3), C, D, E(1 or 2), F, H(2), I and proteolipid K(x).

The protein resides in the cell membrane. It catalyses the reaction ATP + H2O + 4 H(+)(in) = ADP + phosphate + 5 H(+)(out). Its activity is regulated as follows. ATP hydrolysis is inhibited by N',N'-dicyclohexylcarbodiimide. Functionally, component of the A-type ATP synthase that produces ATP from ADP in the presence of a proton gradient across the membrane. The A chain is the catalytic subunit. Hydrolyzes ATP, GTP (86% of ATPase rate) and UTP (54% of ATPase rate), has very poor activity on CTP. The protein is A-type ATP synthase subunit A of Methanocaldococcus jannaschii (strain ATCC 43067 / DSM 2661 / JAL-1 / JCM 10045 / NBRC 100440) (Methanococcus jannaschii).